The following is a 199-amino-acid chain: NADH-quinone oxidoreductase subunit C (199 aa).

Belongs to the complex I 30 kDa subunit family. In terms of assembly, NDH-1 is composed of 14 different subunits. Subunits NuoB, C, D, E, F, and G constitute the peripheral sector of the complex.

The protein localises to the cell inner membrane. It carries out the reaction a quinone + NADH + 5 H(+)(in) = a quinol + NAD(+) + 4 H(+)(out). In terms of biological role, NDH-1 shuttles electrons from NADH, via FMN and iron-sulfur (Fe-S) centers, to quinones in the respiratory chain. The immediate electron acceptor for the enzyme in this species is believed to be ubiquinone. Couples the redox reaction to proton translocation (for every two electrons transferred, four hydrogen ions are translocated across the cytoplasmic membrane), and thus conserves the redox energy in a proton gradient. The polypeptide is NADH-quinone oxidoreductase subunit C (Roseobacter denitrificans (strain ATCC 33942 / OCh 114) (Erythrobacter sp. (strain OCh 114))).